The primary structure comprises 513 residues: MQLNSTEISALIKQRIEKFNVASEARNEGTIVSVSDGIIRIHGLADVMQGEMIELPGGRFALALNLERDSVGAVVMGPYANLQEGMKVTGTGRILEVPVGPALLGRVVNTLGEPIDGKGPIETETFSPVEVIAPGVIERKSVDQPVQTGYKAVDSMIPIGRGQRELIIGDRQTGKTAMAIDAIINQKQSGIYSVYVAIGQKASTIANVVRKLEEHGALDNTIVVVASASEAAALQYLAPYSGCAMGEYFRDRGEDALIVYDDLSKQAVAYRQISLLLKRPPGREAFPGDVFYLHSRLLERASRVSENYVEKFTNGEVKGKTGSLTALPIIETQAGDVSAFVPTNVISITDGQIFLQTELFNAGIRPAVDPGISVSRVGGSAQTKIIKKLSGGIRTALAQYRELAAFAQFSSDLDEATKKQLDHGQKVTELMKQKQYAPMSVFEQAVVIFSAERGYLVDVELAKLADFEAALLSYAKGQSAELVSQIDETGAWNSEIEAQFVKLVEDFKATQTW.

169-176 (GDRQTGKT) is an ATP binding site.

Belongs to the ATPase alpha/beta chains family. In terms of assembly, F-type ATPases have 2 components, CF(1) - the catalytic core - and CF(0) - the membrane proton channel. CF(1) has five subunits: alpha(3), beta(3), gamma(1), delta(1), epsilon(1). CF(0) has three main subunits: a(1), b(2) and c(9-12). The alpha and beta chains form an alternating ring which encloses part of the gamma chain. CF(1) is attached to CF(0) by a central stalk formed by the gamma and epsilon chains, while a peripheral stalk is formed by the delta and b chains.

It localises to the cell inner membrane. The catalysed reaction is ATP + H2O + 4 H(+)(in) = ADP + phosphate + 5 H(+)(out). Produces ATP from ADP in the presence of a proton gradient across the membrane. The alpha chain is a regulatory subunit. The polypeptide is ATP synthase subunit alpha 1 (Photobacterium profundum (strain SS9)).